We begin with the raw amino-acid sequence, 546 residues long: Glutathione synthetase, chloroplastic (546 aa).

Residues 1–63 (MGSGCSSPSI…SPLKCAKVPE (63 aa)) constitute a chloroplast transit peptide. Arg200 is a substrate binding site. Position 216 (Glu216) interacts with ATP. Residues Glu216 and Asn218 each contribute to the Mg(2+) site. Substrate is bound by residues 220–223 (ISSS), 288–290 (ERN), Gln294, and 342–345 (RAGY). ATP-binding positions include Lys381, 435–444 (KPQREGGGNN), Tyr446, 471–474 (MQRI), and Glu497. Glu439 lines the Mg(2+) pocket. Arg522 contacts substrate. ATP is bound by residues Lys524 and Glu530. Position 533–534 (533–534 (VA)) interacts with substrate.

It belongs to the eukaryotic GSH synthase family. Homodimer. It depends on Mg(2+) as a cofactor.

Its subcellular location is the plastid. It is found in the chloroplast. The catalysed reaction is gamma-L-glutamyl-L-cysteine + glycine + ATP = glutathione + ADP + phosphate + H(+). It participates in sulfur metabolism; glutathione biosynthesis; glutathione from L-cysteine and L-glutamate: step 2/2. The polypeptide is Glutathione synthetase, chloroplastic (GSH2) (Solanum lycopersicum (Tomato)).